The following is a 242-amino-acid chain: Sec-independent protein translocase protein TatCd (242 aa).

The next 3 helical transmembrane spans lie at 19-39, 60-80, and 107-127; these read IIVTLAAFFLFLITAFLFVQD, ILWVYMMLSGICAIAASIPVA, and LFALFLAGISFGYFVLFPIVL. Residues 128-149 form an interaction with TatAd region; it reads SFLTHLSSGHFETMFTADRYFR. Residues 150–170 form a helical membrane-spanning segment; sequence FMVNLSLPFGFLFEMPLVVMF. An interaction with TatAd region spans residues 171 to 187; the sequence is LTRLGILNPYRLAKARK. The next 2 membrane-spanning stretches (helical) occupy residues 188-208 and 209-229; these read LSYFLLIVVSILITPPDFISD and FLVMIPLLVLFEVSVTLSAFV.

It belongs to the TatC family. As to quaternary structure, forms a complex with TatAd. Two types of complexes exist: one composed of TatAd and TatCd, and another composed only of TatAd.

The protein localises to the cell membrane. Its function is as follows. Part of the twin-arginine translocation (Tat) system that transports large folded proteins containing a characteristic twin-arginine motif in their signal peptide across membranes. Required for PhoD secretion. TatCd promotes membrane localization of TatAd via domain specific interactions. TatCd is required for stabile production of TatAd as well as for its maintenance. This Bacillus subtilis (strain 168) protein is Sec-independent protein translocase protein TatCd.